The sequence spans 441 residues: Malate dehydrogenase [NADP], chloroplastic (441 aa).

The N-terminal 51 residues, 1 to 51 (MAVAELSPSYKTQLKTCQQLSSSLSTRLSDHRKFSLRLLPRPVSVRGGIRC), are a transit peptide targeting the chloroplast. An intrachain disulfide couples cysteine 75 to cysteine 80. 104–110 (GAAGMIS) serves as a coordination point for NADP(+). Residues arginine 185 and arginine 191 each contribute to the substrate site. Asparagine 198 contacts NADP(+). Glutamine 205 contacts NAD(+). 222–224 (VGN) lines the NADP(+) pocket. Substrate-binding residues include asparagine 224 and arginine 255. Residue histidine 280 is the Proton acceptor of the active site. Residues cysteine 416 and cysteine 428 are joined by a disulfide bond.

It belongs to the LDH/MDH superfamily. MDH type 2 family. As to quaternary structure, homodimer.

The protein localises to the plastid. It is found in the chloroplast. It catalyses the reaction (S)-malate + NADP(+) = oxaloacetate + NADPH + H(+). Chloroplast NADP-MDH is activated upon illumination. In order to be enzymatically active, disulfide bridges on the protein must be reduced by thioredoxin which receives electrons from ferredoxin and the electron transport system of photosynthesis. The chloroplastic, NADP-dependent form is essential for the photosynthesis C4 cycle, which allows plants to circumvent the problem of photorespiration. In C4 plants, NADP-MDH activity acts to convert oxaloacetate to malate in chloroplasts of mesophyll cells for transport to the bundle sheath cells. This is Malate dehydrogenase [NADP], chloroplastic (MDH1) from Mesembryanthemum crystallinum (Common ice plant).